The chain runs to 427 residues: UBX domain-containing protein 2 (427 aa).

2 disordered regions span residues 115–143 and 273–331; these read FDQS…SRAS and ETSG…GVAD. Residues 311-326 show a composition bias toward low complexity; that stretch reads STTESQGESSSQQAES. The UBX domain maps to 349 to 425; that stretch reads PGPNVTRIQI…GIQNTALQFE (77 aa). Ser371 carries the post-translational modification Phosphoserine.

Interacts with cdc48.

In terms of biological role, involved in CDC48-dependent protein degradation through the ubiquitin/proteasome pathway. This chain is UBX domain-containing protein 2 (ubx2), found in Schizosaccharomyces pombe (strain 972 / ATCC 24843) (Fission yeast).